The primary structure comprises 333 residues: Tetraacyldisaccharide 4'-kinase (333 aa).

Residue 60 to 67 (TVGGTGKT) coordinates ATP.

It belongs to the LpxK family.

It catalyses the reaction a lipid A disaccharide + ATP = a lipid IVA + ADP + H(+). Its pathway is glycolipid biosynthesis; lipid IV(A) biosynthesis; lipid IV(A) from (3R)-3-hydroxytetradecanoyl-[acyl-carrier-protein] and UDP-N-acetyl-alpha-D-glucosamine: step 6/6. Transfers the gamma-phosphate of ATP to the 4'-position of a tetraacyldisaccharide 1-phosphate intermediate (termed DS-1-P) to form tetraacyldisaccharide 1,4'-bis-phosphate (lipid IVA). The polypeptide is Tetraacyldisaccharide 4'-kinase (Pseudomonas putida (strain ATCC 700007 / DSM 6899 / JCM 31910 / BCRC 17059 / LMG 24140 / F1)).